A 37-amino-acid polypeptide reads, in one-letter code: Large ribosomal subunit protein bL36c (37 aa).

This sequence belongs to the bacterial ribosomal protein bL36 family.

The protein localises to the plastid. It localises to the chloroplast. This is Large ribosomal subunit protein bL36c from Angiopteris evecta (Mule's foot fern).